The sequence spans 240 residues: Phosphoribosylaminoimidazole-succinocarboxamide synthase (240 aa).

It belongs to the SAICAR synthetase family.

It catalyses the reaction 5-amino-1-(5-phospho-D-ribosyl)imidazole-4-carboxylate + L-aspartate + ATP = (2S)-2-[5-amino-1-(5-phospho-beta-D-ribosyl)imidazole-4-carboxamido]succinate + ADP + phosphate + 2 H(+). It participates in purine metabolism; IMP biosynthesis via de novo pathway; 5-amino-1-(5-phospho-D-ribosyl)imidazole-4-carboxamide from 5-amino-1-(5-phospho-D-ribosyl)imidazole-4-carboxylate: step 1/2. This Pyrobaculum calidifontis (strain DSM 21063 / JCM 11548 / VA1) protein is Phosphoribosylaminoimidazole-succinocarboxamide synthase.